Reading from the N-terminus, the 118-residue chain is Large ribosomal subunit protein uL24 (118 aa).

This sequence belongs to the universal ribosomal protein uL24 family. In terms of assembly, part of the 50S ribosomal subunit.

Its function is as follows. One of two assembly initiator proteins, it binds directly to the 5'-end of the 23S rRNA, where it nucleates assembly of the 50S subunit. In terms of biological role, one of the proteins that surrounds the polypeptide exit tunnel on the outside of the subunit. This chain is Large ribosomal subunit protein uL24, found in Prochlorococcus marinus (strain MIT 9301).